The primary structure comprises 136 residues: Histone H3 (136 aa).

Belongs to the histone H3 family. The nucleosome is a histone octamer containing two molecules each of H2A, H2B, H3 and H4 assembled in one H3-H4 heterotetramer and two H2A-H2B heterodimers. The octamer wraps approximately 147 bp of DNA.

Its subcellular location is the nucleomorph. The protein localises to the chromosome. Core component of nucleosome. Nucleosomes wrap and compact DNA into chromatin, limiting DNA accessibility to the cellular machineries which require DNA as a template. Histones thereby play a central role in transcription regulation, DNA repair, DNA replication and chromosomal stability. DNA accessibility is regulated via a complex set of post-translational modifications of histones, also called histone code, and nucleosome remodeling. This Guillardia theta (Cryptophyte) protein is Histone H3.